A 348-amino-acid chain; its full sequence is LIM domain-containing protein unc-97 (348 aa).

LIM zinc-binding domains are found at residues 21-73 (CVRC…CEHD), 82-132 (CGKC…CREC), 146-196 (CHKC…CLRC), 205-255 (CGAC…CEQH), and 264-315 (CFKC…CKRC).

Interacts with unc-98. Component of an integrin containing attachment complex, composed of at least pat-2, pat-3, pat-4, pat-6, unc-52, unc-97 and unc-112. As to expression, restricted to tissue types that attach to the hypodermis, specifically body wall muscles, vulval muscles, and mechanosensory neurons.

The protein resides in the cell junction. Its subcellular location is the adherens junction. It is found in the nucleus. Its function is as follows. Component of an integrin containing attachment complex, which is required for muscle development and maintenance. Probably function in adherens junction. Affects the structural integrity of the integrin containing muscle adherens junctions and contributes to the mechanosensory functions of touch neurons. This is LIM domain-containing protein unc-97 from Caenorhabditis elegans.